A 491-amino-acid chain; its full sequence is MANYFNTLNLRQQLAQLGKCRFMGRDEFADGASYLQGKKVVIVGCGAQGLNQGLNMRDSGLDISYALRKEAIAEKRASWRKATENGFKVGTYEELIPQADLVVNLTPDKQHSDVVRTVQPLMKDGAALGYSHGFNIVEVGEQIRKDITVVMVAPKCPGTEVREEYKRGFGVPTLIAVHPENDPKGEGMAIAKAWAAATGGHRAGVLESSFVAEVKSDLMGEQTILCGMLQAGSLLCFDKLVEEGTDPAYAEKLIQFGWETITEALKQGGITLMMDRLSNPAKLRAYALSEQLKEIMAPLFQKHMDDIISGEFSSGMMADWANDDKKLLTWREETGKTAFETAPQYEGKIGEQEYFDKGVLMIAMVKAGVELAFETMVDSGIIEESAYYESLHELPLIANTIARKRLYEMNVVISDTAEYGNYLFSYACVPLLKPFMAELQPGDLGKAIPEGAVDNAQLHDVNEAIRSHAIEQVGKKLRGYMTDMKRIAVAG.

A KARI N-terminal Rossmann domain is found at 15–208; that stretch reads AQLGKCRFMG…GGHRAGVLES (194 aa). NADP(+) contacts are provided by residues 45–48, arginine 68, arginine 76, serine 78, and 108–110; these read CGAQ and DKQ. The active site involves histidine 132. NADP(+) is bound at residue glycine 158. KARI C-terminal knotted domains follow at residues 209 to 344 and 345 to 484; these read SFVA…TAPQ and YEGK…MTDM. Residues aspartate 217, glutamate 221, glutamate 389, and glutamate 393 each coordinate Mg(2+). A substrate-binding site is contributed by serine 414.

This sequence belongs to the ketol-acid reductoisomerase family. It depends on Mg(2+) as a cofactor.

It carries out the reaction (2R)-2,3-dihydroxy-3-methylbutanoate + NADP(+) = (2S)-2-acetolactate + NADPH + H(+). The catalysed reaction is (2R,3R)-2,3-dihydroxy-3-methylpentanoate + NADP(+) = (S)-2-ethyl-2-hydroxy-3-oxobutanoate + NADPH + H(+). Its pathway is amino-acid biosynthesis; L-isoleucine biosynthesis; L-isoleucine from 2-oxobutanoate: step 2/4. It functions in the pathway amino-acid biosynthesis; L-valine biosynthesis; L-valine from pyruvate: step 2/4. Functionally, involved in the biosynthesis of branched-chain amino acids (BCAA). Catalyzes an alkyl-migration followed by a ketol-acid reduction of (S)-2-acetolactate (S2AL) to yield (R)-2,3-dihydroxy-isovalerate. In the isomerase reaction, S2AL is rearranged via a Mg-dependent methyl migration to produce 3-hydroxy-3-methyl-2-ketobutyrate (HMKB). In the reductase reaction, this 2-ketoacid undergoes a metal-dependent reduction by NADPH to yield (R)-2,3-dihydroxy-isovalerate. The protein is Ketol-acid reductoisomerase (NADP(+)) of Shigella dysenteriae serotype 1 (strain Sd197).